A 183-amino-acid polypeptide reads, in one-letter code: Seminal plasma protein BSP-30 kDa (183 aa).

Positions 1–25 (MAPLVGLFLIWAGASVFQQLHPVNG) are cleaved as a signal peptide. The segment at 23 to 47 (VNGGDIPDPGSKPTPPGMADELPTE) is disordered. O-linked (GalNAc...) threonine glycosylation is found at T36, T46, T57, T58, T59, and T64. 2 Fibronectin type-II domains span residues 92-136 (FEGP…FCTE) and 137-183 (RDEP…WKYC). 4 cysteine pairs are disulfide-bonded: C97–C121, C111–C134, C142–C168, and C156–C183.

This sequence belongs to the seminal plasma protein family.

The protein resides in the secreted. Its function is as follows. Binds to spermatozoa upon ejaculation and may play a role in sperm capacitation. Displays heparin-, gelatin- and phospholipid-binding activities. The sequence is that of Seminal plasma protein BSP-30 kDa from Bos taurus (Bovine).